We begin with the raw amino-acid sequence, 196 residues long: uncharacterized protein (196 aa).

The chain crosses the membrane as a helical span at residues isoleucine 26–phenylalanine 46.

The protein resides in the membrane. This is an uncharacterized protein from Mus musculus (Mouse).